Here is a 205-residue protein sequence, read N- to C-terminus: Ribosomal RNA small subunit methyltransferase G (205 aa).

S-adenosyl-L-methionine is bound by residues Gly-66, Phe-71, 119-120 (IE), and Arg-135.

This sequence belongs to the methyltransferase superfamily. RNA methyltransferase RsmG family.

The protein resides in the cytoplasm. The catalysed reaction is guanosine(527) in 16S rRNA + S-adenosyl-L-methionine = N(7)-methylguanosine(527) in 16S rRNA + S-adenosyl-L-homocysteine. Its function is as follows. Specifically methylates the N7 position of guanine in position 527 of 16S rRNA. The protein is Ribosomal RNA small subunit methyltransferase G of Rhizobium etli (strain ATCC 51251 / DSM 11541 / JCM 21823 / NBRC 15573 / CFN 42).